A 253-amino-acid chain; its full sequence is MDMALPEFSMRQLLEAGVHYGHQTARWNPKMAEFIYGDRNGIHIVDLTQTVPMLDQALKVVRDTVAKGGRILFVGTKRQAQKPIAEAAEKCAQHYMNHRWLGGTLTNWKTVSQSIQRLKQLDEVLATGAEGLTKKERLNMEREQQKLQASLGGIREMGGTPDLLFIIDVGKEDLAIAEAQKLGIPVVAVVDTNNSPKGVDYVIPGNDDAARAIALYCDLVSRAALDGMSAQMGAAGIDLGALDVAPEEETLEA.

This sequence belongs to the universal ribosomal protein uS2 family.

This Cereibacter sphaeroides (strain ATCC 17023 / DSM 158 / JCM 6121 / CCUG 31486 / LMG 2827 / NBRC 12203 / NCIMB 8253 / ATH 2.4.1.) (Rhodobacter sphaeroides) protein is Small ribosomal subunit protein uS2.